Consider the following 622-residue polypeptide: Kinesin light chain 2 (622 aa).

Residues 78-143 (ILALSSHLGA…KQHLLFMSQI (66 aa)) are a coiled coil. Basic and acidic residues predominate over residues 145 to 164 (KLDEDASPNEEKGDVPKDTL). The segment at 145-191 (KLDEDASPNEEKGDVPKDTLDDLFPNEDEQSPAPSPGGGDVSGQHGG) is disordered. A phosphoserine mark is found at serine 151, serine 175, and serine 179. A compositionally biased stretch (gly residues) spans 180–190 (PGGGDVSGQHG). 5 TPR repeats span residues 198 to 231 (LRTLHNLVIQYASQGRYEVAVPLCKQALEDLEKT), 240 to 273 (ATMLNILALVYRDQNKYKEAAHLLNDALAIREKT), 282 to 315 (AATLNNLAVLYGKRGKYKEAEPLCKRALEIREKV), 324 to 357 (AKQLSNLALLCQNQGKAEEVEYYYRRALEIYATR), and 366 to 399 (AKTKNNLASCYLKQGKYQDAETLYKEILTRAHEK). Serine 445 carries the phosphoserine modification. One copy of the TPR 6 repeat lies at 449–482 (NTTLRSLGALYRRQGKLEAAHTLEDCASRNRKQG). Disordered regions lie at residues 476-548 (SRNR…SFGK) and 563-622 (KLQG…SLVG). Positions 493 to 509 (ELLKDGSGRRGDRRSSR) are enriched in basic and acidic residues. 2 positions are modified to phosphoserine: serine 508 and serine 521. The span at 538–547 (GSLRRSGSFG) shows a compositional bias: low complexity. 6 positions are modified to phosphoserine: serine 581, serine 582, serine 589, serine 608, serine 610, and serine 615. Over residues 601-622 (LSDSRTLSSSSMDLSRRSSLVG) the composition is skewed to low complexity.

The protein belongs to the kinesin light chain family. In terms of assembly, oligomeric complex composed of two heavy chains and two light chains. Interacts (via TPR repeats) with PLEKHM2.

Its subcellular location is the cytoplasm. The protein resides in the cytoskeleton. It localises to the lysosome membrane. Its function is as follows. Kinesin is a microtubule-associated force-producing protein that plays a role in organelle transport. The light chain functions in coupling of cargo to the heavy chain or in the modulation of its ATPase activity. Through binding with PLEKHM2 and ARL8B, recruits kinesin-1 to lysosomes and hence direct lysosomes movement toward microtubule plus ends. This Homo sapiens (Human) protein is Kinesin light chain 2.